A 55-amino-acid polypeptide reads, in one-letter code: Mitochondrial import receptor subunit TOM7 homolog (55 aa).

Topologically, residues 1-20 are cytoplasmic; that stretch reads MVKLSKEAKQRLQQLFKGSQ. Residues 21 to 36 traverse the membrane as a helical segment; the sequence is FAIRWGFIPLVIYLGF. The Mitochondrial intermembrane portion of the chain corresponds to 37-55; it reads KRGADPGMPEPTVLSLLWG.

The protein belongs to the Tom7 family. Forms part of the preprotein translocase complex of the outer mitochondrial membrane (TOM complex) which consists of at least 7 different proteins (TOMM5, TOMM6, TOMM7, TOMM20, TOMM22, TOMM40 and TOMM70).

It localises to the mitochondrion outer membrane. In terms of biological role, required for assembly and stability of the TOM complex. Positive regulator of PRKN translocation to damaged mitochondria. Acts probably by stabilizing PINK1 on the outer membrane of depolarized mitochondria. In Homo sapiens (Human), this protein is Mitochondrial import receptor subunit TOM7 homolog (TOMM7).